A 583-amino-acid chain; its full sequence is Radixin (583 aa).

Residues 5–295 (INVRVTTMDA…GNHELYMRRR (291 aa)) form the FERM domain. Position 60-63 (60-63 (KLNK)) interacts with a 1,2-diacyl-sn-glycero-3-phospho-(1D-myo-inositol). K83 carries the post-translational modification N6-succinyllysine. K278 is an a 1,2-diacyl-sn-glycero-3-phospho-(1D-myo-inositol) binding site. Disordered regions lie at residues 310–336 (REEK…AEKE), 374–407 (ELDQ…AKQA), and 458–526 (KTKE…RVNK). Basic and acidic residues predominate over residues 374 to 400 (ELDQERKRAKEEAERLEKERRAAEEAK). Residues 469–480 (APPPPPPPPVVP) are compositionally biased toward pro residues. Basic and acidic residues-rich tracts occupy residues 483–492 (ENEHDEHDEN) and 506–525 (MNHR…ERVN). Position 564 is a phosphothreonine; by ROCK2 (T564).

As to quaternary structure, interacts with CPNE1 (via VWFA domain) and CPNE4 (via VWFA domain). Binds NHERF1. Interacts with NHERF1, NHERF2, LAYN, MME/NEP and ICAM2. Interacts (via FERM domain) with SPN/CD43 cytoplasmic tail. Interacts with CD44. Interacts with CLIC5; may work together in a complex which also includes EZR and MYO6 to stabilize linkages between the plasma membrane and subjacent actin cytoskeleton at the base of stereocilia. In terms of processing, phosphorylated by tyrosine-protein kinases. Phosphorylation by ROCK2 suppresses the head-to-tail association of the N-terminal and C-terminal halves resulting in an opened conformation which is capable of actin and membrane-binding.

Its subcellular location is the cell membrane. The protein resides in the cytoplasm. It is found in the cytoskeleton. The protein localises to the cleavage furrow. It localises to the cell projection. Its subcellular location is the microvillus. The protein resides in the stereocilium. With respect to regulation, a head-to-tail association, of the N-terminal and C-terminal halves results in a closed conformation (inactive form) which is incapable of actin or membrane-binding. Functionally, probably plays a crucial role in the binding of the barbed end of actin filaments to the plasma membrane. This Sus scrofa (Pig) protein is Radixin (RDX).